The primary structure comprises 298 residues: Tryptophan 2,3-dioxygenase (298 aa).

Substrate is bound by residues 51–55, Tyr-113, and Arg-117; that span reads FIIQH. Residue His-240 coordinates heme. Substrate is bound at residue Thr-254.

Belongs to the tryptophan 2,3-dioxygenase family. In terms of assembly, homotetramer. Heme is required as a cofactor.

It catalyses the reaction L-tryptophan + O2 = N-formyl-L-kynurenine. Its pathway is amino-acid degradation; L-tryptophan degradation via kynurenine pathway; L-kynurenine from L-tryptophan: step 1/2. Its function is as follows. Heme-dependent dioxygenase that catalyzes the oxidative cleavage of the L-tryptophan (L-Trp) pyrrole ring and converts L-tryptophan to N-formyl-L-kynurenine. Catalyzes the oxidative cleavage of the indole moiety. The chain is Tryptophan 2,3-dioxygenase from Xanthomonas campestris pv. campestris (strain 8004).